The following is a 247-amino-acid chain: Nodulation protein H (247 aa).

The hydrophobic stretch occupies residues 1–17 (MTHSTLPPQPFAILAMP).

Required for the formation of sulfated nod factor. Proposed to transfer activated sulfate (PAPS) to a N-acetylglucosamine of the nod factor. The chain is Nodulation protein H (nodH) from Rhizobium meliloti (strain 1021) (Ensifer meliloti).